An 88-amino-acid chain; its full sequence is Small ribosomal subunit protein bS20 (88 aa).

Belongs to the bacterial ribosomal protein bS20 family.

Binds directly to 16S ribosomal RNA. The protein is Small ribosomal subunit protein bS20 of Methylorubrum populi (strain ATCC BAA-705 / NCIMB 13946 / BJ001) (Methylobacterium populi).